The sequence spans 417 residues: Squalene synthase (417 aa).

Arg52 and Arg77 together coordinate NADP(+). The Mg(2+) site is built by Asp80, Glu83, and Asp84. Residue Arg218 participates in NADP(+) binding. A helical transmembrane segment spans residues 284–304 (SVFNFCAIPQVMAIATLAACY). The NADP(+) site is built by Lys315 and Arg317. A helical transmembrane segment spans residues 384–404 (PIYLSFVMLLAALSWQYLTTL).

This sequence belongs to the phytoene/squalene synthase family. Requires Mg(2+) as cofactor. As to expression, widely expressed.

It localises to the endoplasmic reticulum membrane. It carries out the reaction 2 (2E,6E)-farnesyl diphosphate + NADPH + H(+) = squalene + 2 diphosphate + NADP(+). It catalyses the reaction 2 (2E,6E)-farnesyl diphosphate + NADH + H(+) = squalene + 2 diphosphate + NAD(+). The catalysed reaction is 2 (2E,6E)-farnesyl diphosphate = presqualene diphosphate + diphosphate. The enzyme catalyses presqualene diphosphate + NADH + H(+) = squalene + diphosphate + NAD(+). It carries out the reaction presqualene diphosphate + NADPH + H(+) = squalene + diphosphate + NADP(+). It functions in the pathway terpene metabolism; lanosterol biosynthesis; lanosterol from farnesyl diphosphate: step 1/3. In terms of biological role, catalyzes the condensation of 2 farnesyl pyrophosphate (FPP) moieties to form squalene. Proceeds in two distinct steps. In the first half-reaction, two molecules of FPP react to form the stable presqualene diphosphate intermediate (PSQPP), with concomitant release of a proton and a molecule of inorganic diphosphate. In the second half-reaction, PSQPP undergoes heterolysis, isomerization, and reduction with NADPH or NADH to form squalene. It is the first committed enzyme of the sterol biosynthesis pathway. The chain is Squalene synthase (FDFT1) from Homo sapiens (Human).